We begin with the raw amino-acid sequence, 225 residues long: Ribonuclease 3 (225 aa).

The RNase III domain maps to 5–127 (LDRLQRSLGH…VFAATFLDQG (123 aa)). E40 contacts Mg(2+). D44 is an active-site residue. Positions 113 and 116 each coordinate Mg(2+). Residue E116 is part of the active site. The DRBM domain occupies 154 to 224 (DPKTALQELL…AELALAQLRK (71 aa)).

The protein belongs to the ribonuclease III family. In terms of assembly, homodimer. Requires Mg(2+) as cofactor.

It localises to the cytoplasm. It carries out the reaction Endonucleolytic cleavage to 5'-phosphomonoester.. Functionally, digests double-stranded RNA. Involved in the processing of primary rRNA transcript to yield the immediate precursors to the large and small rRNAs (23S and 16S). Processes some mRNAs, and tRNAs when they are encoded in the rRNA operon. Processes pre-crRNA and tracrRNA of type II CRISPR loci if present in the organism. The chain is Ribonuclease 3 from Aromatoleum aromaticum (strain DSM 19018 / LMG 30748 / EbN1) (Azoarcus sp. (strain EbN1)).